A 347-amino-acid chain; its full sequence is Dolichyl-diphosphooligosaccharide--protein glycosyltransferase subunit TUSC3 (347 aa).

The N-terminal stretch at Met1 to Gly41 is a signal peptide. The Lumenal portion of the chain corresponds to Gln42–Pro196. In terms of domain architecture, Thioredoxin spans Trp59–Asp187. N-linked (GlcNAc...) asparagine glycosylation occurs at Asn83. Cys99 and Cys102 form a disulfide bridge. A helical membrane pass occupies residues Asn197–Leu217. Residues Arg218–Asn221 lie on the Cytoplasmic side of the membrane. The chain crosses the membrane as a helical span at residues Leu222 to Met242. Topologically, residues Thr243 to Gln276 are lumenal. Residues Phe277 to Leu297 form a helical membrane-spanning segment. The Cytoplasmic segment spans residues Leu298 to Arg312. The chain crosses the membrane as a helical span at residues Ile313 to Phe333. The Lumenal segment spans residues Arg334–Lys347.

This sequence belongs to the OST3/OST6 family. As to quaternary structure, accessory component of the STT3B-containing form of the oligosaccharyltransferase (OST) complex. OST exists in two different complex forms which contain common core subunits RPN1, RPN2, OST48, OST4, DAD1 and TMEM258, either STT3A or STT3B as catalytic subunits, and form-specific accessory subunits. OST can form stable complexes with the Sec61 complex or with both the Sec61 and TRAP complexes. The association of TUSC3 or MAGT1 with the STT3B-containing complex seems to be mutually exclusvice.

It localises to the endoplasmic reticulum membrane. The protein operates within protein modification; protein glycosylation. Its function is as follows. Acts as accessory component of the N-oligosaccharyl transferase (OST) complex which catalyzes the transfer of a high mannose oligosaccharide from a lipid-linked oligosaccharide donor to an asparagine residue within an Asn-X-Ser/Thr consensus motif in nascent polypeptide chains. Involved in N-glycosylation of STT3B-dependent substrates. Specifically required for the glycosylation of a subset of acceptor sites that are near cysteine residues; in this function seems to act redundantly with MAGT1. In its oxidized form proposed to form transient mixed disulfides with a glycoprotein substrate to facilitate access of STT3B to the unmodified acceptor site. Also has oxidoreductase-independent functions in the STT3B-containing OST complex possibly involving substrate recognition. Could indirectly play a role in Mg(2+) transport. The sequence is that of Dolichyl-diphosphooligosaccharide--protein glycosyltransferase subunit TUSC3 (TUSC3) from Bos taurus (Bovine).